Consider the following 101-residue polypeptide: Small ribosomal subunit protein bS16 (101 aa).

The protein belongs to the bacterial ribosomal protein bS16 family.

The polypeptide is Small ribosomal subunit protein bS16 (Ureaplasma parvum serovar 3 (strain ATCC 700970)).